The following is a 141-amino-acid chain: Large ribosomal subunit protein uL23B (141 aa).

A disordered region spans residues 1–22 (MSVGKAKGAQKTVQKGIHNKVA).

Belongs to the universal ribosomal protein uL23 family. As to quaternary structure, component of the large ribosomal subunit (LSU). Mature yeast ribosomes consist of a small (40S) and a large (60S) subunit. The 40S small subunit contains 1 molecule of ribosomal RNA (18S rRNA) and at least 33 different proteins. The large 60S subunit contains 3 rRNA molecules (25S, 5.8S and 5S rRNA) and at least 46 different proteins. uL23 is associated with the polypeptide exit tunnel.

Its subcellular location is the cytoplasm. Functionally, this protein binds to a specific region on the 26S rRNA. Its function is as follows. Component of the ribosome, a large ribonucleoprotein complex responsible for the synthesis of proteins in the cell. The small ribosomal subunit (SSU) binds messenger RNAs (mRNAs) and translates the encoded message by selecting cognate aminoacyl-transfer RNA (tRNA) molecules. The large subunit (LSU) contains the ribosomal catalytic site termed the peptidyl transferase center (PTC), which catalyzes the formation of peptide bonds, thereby polymerizing the amino acids delivered by tRNAs into a polypeptide chain. The nascent polypeptides leave the ribosome through a tunnel in the LSU and interact with protein factors that function in enzymatic processing, targeting, and the membrane insertion of nascent chains at the exit of the ribosomal tunnel. uL23 is a major component of the universal docking site for these factors at the polypeptide exit tunnel. This chain is Large ribosomal subunit protein uL23B (rpl2502), found in Schizosaccharomyces pombe (strain 972 / ATCC 24843) (Fission yeast).